Reading from the N-terminus, the 201-residue chain is Cardiotrophin-1 (201 aa).

Belongs to the IL-6 superfamily. Highly expressed in heart, skeletal muscle, prostate and ovary. Lower levels in lung, kidney, pancreas, thymus, testis and small intestine. Little or no expression in brain, placenta, liver, spleen, colon or peripheral blood leukocytes.

Its subcellular location is the secreted. Functionally, induces cardiac myocyte hypertrophy in vitro. Binds to and activates the ILST/gp130 receptor. The protein is Cardiotrophin-1 (CTF1) of Homo sapiens (Human).